A 244-amino-acid polypeptide reads, in one-letter code: Dirigent protein 18 (244 aa).

The first 25 residues, 1–25 (MMKQSPFSLLTSIFLIAALFTATTA), serve as a signal peptide directing secretion.

It belongs to the plant dirigent protein family. In terms of assembly, homodimer.

The protein localises to the secreted. It is found in the extracellular space. Its subcellular location is the apoplast. Functionally, dirigent proteins impart stereoselectivity on the phenoxy radical-coupling reaction, yielding optically active lignans from two molecules of coniferyl alcohol in the biosynthesis of lignans, flavonolignans, and alkaloids and thus plays a central role in plant secondary metabolism. The chain is Dirigent protein 18 (DIR18) from Arabidopsis thaliana (Mouse-ear cress).